Reading from the N-terminus, the 822-residue chain is Glycerol-3-phosphate acyltransferase (822 aa).

Positions 306-311 (CHRSHM) match the HXXXXD motif motif. The tract at residues 803 to 822 (ASSSAEMEAESQAVEETTQE) is disordered.

It belongs to the GPAT/DAPAT family.

It localises to the cell inner membrane. The catalysed reaction is sn-glycerol 3-phosphate + an acyl-CoA = a 1-acyl-sn-glycero-3-phosphate + CoA. It participates in phospholipid metabolism; CDP-diacylglycerol biosynthesis; CDP-diacylglycerol from sn-glycerol 3-phosphate: step 1/3. The protein is Glycerol-3-phosphate acyltransferase of Pectobacterium carotovorum subsp. carotovorum (strain PC1).